The following is a 178-amino-acid chain: Large ribosomal subunit protein uL5 (178 aa).

This sequence belongs to the universal ribosomal protein uL5 family. In terms of assembly, part of the 50S ribosomal subunit; part of the 5S rRNA/L5/L18/L25 subcomplex. Contacts the 5S rRNA and the P site tRNA. Forms a bridge to the 30S subunit in the 70S ribosome.

Its function is as follows. This is one of the proteins that bind and probably mediate the attachment of the 5S RNA into the large ribosomal subunit, where it forms part of the central protuberance. In the 70S ribosome it contacts protein S13 of the 30S subunit (bridge B1b), connecting the 2 subunits; this bridge is implicated in subunit movement. Contacts the P site tRNA; the 5S rRNA and some of its associated proteins might help stabilize positioning of ribosome-bound tRNAs. The protein is Large ribosomal subunit protein uL5 of Psychrobacter sp. (strain PRwf-1).